Consider the following 297-residue polypeptide: 4-hydroxybenzoate octaprenyltransferase (297 aa).

A run of 9 helical transmembrane segments spans residues 29 to 49 (IGTY…AEGV), 55 to 75 (LFIF…VNDF), 102 to 122 (AWTL…LTNA), 124 to 141 (TVYL…YPFM), 146 to 166 (FYPQ…AFTA), 169 to 189 (GSLP…TVAY), 219 to 239 (VIIV…GVRF), 241 to 261 (LGQW…WEFW), and 270 to 290 (VCFK…AGIV).

Belongs to the UbiA prenyltransferase family. Mg(2+) serves as cofactor.

It localises to the cell inner membrane. The enzyme catalyses all-trans-octaprenyl diphosphate + 4-hydroxybenzoate = 4-hydroxy-3-(all-trans-octaprenyl)benzoate + diphosphate. It functions in the pathway cofactor biosynthesis; ubiquinone biosynthesis. Its function is as follows. Catalyzes the prenylation of para-hydroxybenzoate (PHB) with an all-trans polyprenyl group. Mediates the second step in the final reaction sequence of ubiquinone-8 (UQ-8) biosynthesis, which is the condensation of the polyisoprenoid side chain with PHB, generating the first membrane-bound Q intermediate 3-octaprenyl-4-hydroxybenzoate. This Stutzerimonas stutzeri (strain A1501) (Pseudomonas stutzeri) protein is 4-hydroxybenzoate octaprenyltransferase.